Consider the following 153-residue polypeptide: Proline-rich membrane anchor 1 (153 aa).

A signal peptide spans 1–35 (MLLRDLVLRRGCCWSSLLLHCALHPLWGFVQVTHG). Residues 36 to 92 (EPQKSCSKVTDSCRHVCQCRPPPPLPPPPPPPPPPRLLSAPAPNSTSCPTEESWWSG) lie on the Extracellular side of the membrane. The 15-residue stretch at 56-70 (PPPPLPPPPPPPPPP) folds into the PRAD domain. Pro residues predominate over residues 59 to 71 (PLPPPPPPPPPPR). The tract at residues 59 to 79 (PLPPPPPPPPPPRLLSAPAPN) is disordered. N79 carries N-linked (GlcNAc...) asparagine glycosylation. A helical membrane pass occupies residues 93-113 (LVIIIAVCCASLVFLTVLVII). The Cytoplasmic segment spans residues 114 to 153 (CYKAIKRKPLRKDENGTSVAEYPMSASQSNKGVDVNNAVV).

In terms of assembly, interacts with ACHE, probably through disulfide bonds.

The protein resides in the cell membrane. The protein localises to the cell junction. It is found in the synapse. Its function is as follows. Required to anchor acetylcholinesterase (ACHE) to the basal lamina of the neuromuscular junction and to the membrane of neuronal synapses in brain. Also able to organize ACHE into tetramers. The sequence is that of Proline-rich membrane anchor 1 (PRIMA1) from Homo sapiens (Human).